Consider the following 177-residue polypeptide: Glia associated membrane protein glam-1 (177 aa).

Helical transmembrane passes span 19 to 39, 42 to 62, and 76 to 96; these read PLVVGLAVFGAIRSFVQFWMS, FGMAGTHFCVLLLDLLLLFGA, and VTFACVLIAIIRFMIYPVVFA.

It is found in the membrane. This is Glia associated membrane protein glam-1 from Caenorhabditis elegans.